A 191-amino-acid polypeptide reads, in one-letter code: Cathelicidin-related antimicrobial peptide Na_CRAMP (191 aa).

Positions methionine 1 to serine 22 are cleaved as a signal peptide. Positions phenylalanine 23–lysine 161 are excised as a propeptide. 2 cysteine pairs are disulfide-bonded: cysteine 81–cysteine 92 and cysteine 103–cysteine 120. The tract at residues glutamate 126–proline 154 is disordered. Basic and acidic residues predominate over residues glutamate 140–proline 154.

This sequence belongs to the cathelicidin family. In terms of tissue distribution, expressed by the venom gland.

The protein resides in the secreted. It localises to the target cell membrane. Its function is as follows. Potent antimicrobial peptide against most of Gram-negative bacteria, some Gram-positive bacteria (Bacillus) and some fungi. Adopts an amphipathic alpha helical conformation, that may allow to partition into the target membrane. No hemolytic and cytotoxic activities have been observed on mammalian cells. This Naja atra (Chinese cobra) protein is Cathelicidin-related antimicrobial peptide Na_CRAMP.